Here is a 266-residue protein sequence, read N- to C-terminus: 4-hydroxy-tetrahydrodipicolinate reductase (266 aa).

10–15 (GPRGRM) contributes to the NAD(+) binding site. Position 38 (K38) interacts with NADP(+). NAD(+) contacts are provided by residues 99 to 101 (GTT) and 125 to 128 (APNF). H155 serves as the catalytic Proton donor/acceptor. H156 serves as a coordination point for (S)-2,3,4,5-tetrahydrodipicolinate. The active-site Proton donor is the K159. 165-166 (GT) contacts (S)-2,3,4,5-tetrahydrodipicolinate.

It belongs to the DapB family.

It localises to the cytoplasm. The catalysed reaction is (S)-2,3,4,5-tetrahydrodipicolinate + NAD(+) + H2O = (2S,4S)-4-hydroxy-2,3,4,5-tetrahydrodipicolinate + NADH + H(+). The enzyme catalyses (S)-2,3,4,5-tetrahydrodipicolinate + NADP(+) + H2O = (2S,4S)-4-hydroxy-2,3,4,5-tetrahydrodipicolinate + NADPH + H(+). Its pathway is amino-acid biosynthesis; L-lysine biosynthesis via DAP pathway; (S)-tetrahydrodipicolinate from L-aspartate: step 4/4. In terms of biological role, catalyzes the conversion of 4-hydroxy-tetrahydrodipicolinate (HTPA) to tetrahydrodipicolinate. This Bacillus cytotoxicus (strain DSM 22905 / CIP 110041 / 391-98 / NVH 391-98) protein is 4-hydroxy-tetrahydrodipicolinate reductase.